We begin with the raw amino-acid sequence, 313 residues long: Alpha/beta-gliadin clone PW8142 (313 aa).

The N-terminal stretch at 1 to 20 (MKTFLILALVATTATTAVRV) is a signal peptide. A compositionally biased stretch (low complexity) spans 22 to 55 (VPQLQPKNPSQQQPQEQVPLVQQQQFPGQQQQFP). 2 disordered regions span residues 22–122 (VPQL…QQAQ) and 234–272 (QQPS…VQPQ). Composition is skewed to pro residues over residues 56–68 (PQQP…PFPS) and 78–101 (FPQP…PQQP). Low complexity-rich tracts occupy residues 102–122 (YPQQ…QQAQ) and 234–264 (QQPS…QNPQ).

Belongs to the gliadin/glutenin family. Post-translationally, substrate of transglutaminase.

Functionally, gliadin is the major seed storage protein in wheat. The protein is Alpha/beta-gliadin clone PW8142 of Triticum aestivum (Wheat).